The primary structure comprises 193 residues: Acyl carrier protein phosphodiesterase (193 aa).

The protein belongs to the AcpH family.

It catalyses the reaction holo-[ACP] + H2O = apo-[ACP] + (R)-4'-phosphopantetheine + H(+). Converts holo-ACP to apo-ACP by hydrolytic cleavage of the phosphopantetheine prosthetic group from ACP. In Escherichia coli O139:H28 (strain E24377A / ETEC), this protein is Acyl carrier protein phosphodiesterase.